The primary structure comprises 278 residues: NH(3)-dependent NAD(+) synthetase (278 aa).

Residue 43–50 coordinates ATP; sequence GISGGVDS. Aspartate 49 is a Mg(2+) binding site. Arginine 146 contributes to the deamido-NAD(+) binding site. ATP is bound at residue threonine 166. Glutamate 171 is a binding site for Mg(2+). 2 residues coordinate deamido-NAD(+): lysine 179 and aspartate 186. ATP-binding residues include lysine 195 and threonine 217. 266 to 267 contributes to the deamido-NAD(+) binding site; it reads HK.

The protein belongs to the NAD synthetase family. As to quaternary structure, homodimer.

The catalysed reaction is deamido-NAD(+) + NH4(+) + ATP = AMP + diphosphate + NAD(+) + H(+). It participates in cofactor biosynthesis; NAD(+) biosynthesis; NAD(+) from deamido-NAD(+) (ammonia route): step 1/1. In terms of biological role, catalyzes the ATP-dependent amidation of deamido-NAD to form NAD. Uses ammonia as a nitrogen source. This chain is NH(3)-dependent NAD(+) synthetase, found in Pseudoalteromonas translucida (strain TAC 125).